The following is a 739-amino-acid chain: MSTPHHQFESKSSTAIRRRLSSSVSSKQRPNIMTTTFASLTPMWAGVAGTLVNNNTQYEIAVTVHDGVYSTDFASVIIPVTPGDTVKNSKDIEAQVLNLIRKFSAEHLCKFLGAGITLALLKECPNLCTRLWLDMDIVPIVFNIKPFHTDSVTRPNIKHRISSTTGSYVPSGSETPTVYVEASHLDDPSHLSPNAAQKLPIPRTLDEQSDSAARKCLMYFGPNNNPRLSIGARNQVTVDAGGKIHLIDDLEEYRETVGAGTWNAVIKLADELREKKVKIGFFSSTPQGGGVALMRHALIRFLTALDVDVAWYVPNPSPQVFRTTKNNHNILQGVAAPDLRLTQEAKDAFDAWILKNGLRWTAEGGPLAPGGVDVVFIDDPQMPGLIPLIKKVRPEVPIVYRSHIEIRSDLVHVAGSPQEEVWKYLWNNIQLADLFISHPVSKFVPSDVPTEKLALLGAATDWLDGLNKDLDPWDSQFYMGEFRSPCAKEKMHELNWPARDYIVQVARFDPSKGIPNVVDSYYKFRNLLRTRSPDMDESEHPQLLICGHGAVDDPDASIIYDQIMALVNSDPYKEYAHDIVVMRLPPSDELLNAMMANSRIALQLSTREGFEVKVSEALHTGKPVIACRTGGIPLQIQHGKSGYLTTPGDNDAVAGHLYDLYTDEALYRKMSDFARTHVSDEVGTVGNAAAWLYLAVMYSRGEKIKPNGAWINDLLREETGEPYKEGETKLPRTKLDMQG.

A propeptide spanning residues 1–26 (MSTPHHQFESKSSTAIRRRLSSSVSS) is cleaved from the precursor. The disordered stretch occupies residues 1-28 (MSTPHHQFESKSSTAIRRRLSSSVSSKQ).

It belongs to the glycosyltransferase group 1 family. Glycosyltransferase 4 subfamily. As to quaternary structure, homodimer.

The catalysed reaction is alpha,alpha-trehalose + phosphate = alpha-D-glucose + alpha-D-glucose 1-phosphate. Its function is as follows. Reversibly catalyzes the synthesis and degradation of trehalose from glucose and alpha-D-glucose 1-phosphate. The equilibrium lies in the direction of trehalose synthesis. In Pleurotus pulmonarius (Indian oyster mushroom), this protein is Trehalose phosphorylase.